We begin with the raw amino-acid sequence, 879 residues long: Serine/threonine-protein kinase greatwall (879 aa).

Methionine 1 carries the post-translational modification N-acetylmethionine. The tract at residues 1-23 (MDPTAGSKKEPGGGAATEEGVNR) is disordered. In terms of domain architecture, Protein kinase spans 35-835 (FSIVKPISRG…MKELKRHPLF (801 aa)). Residues 41–49 (ISRGAFGKV) and lysine 62 contribute to the ATP site. The Proton acceptor role is filled by aspartate 156. A phosphothreonine mark is found at threonine 207 and threonine 222. Residues serine 293, serine 370, and serine 453 each carry the phosphoserine modification. Phosphothreonine is present on threonine 519. Phosphoserine occurs at positions 552 and 556. The tract at residues 566–632 (SMNSDSSFPG…VENPAVQESN (67 aa)) is disordered. Over residues 589-598 (DSDRSIKESS) the composition is skewed to basic and acidic residues. 3 positions are modified to phosphoserine: serine 631, serine 657, and serine 668. The tract at residues 700-728 (KRRSCMPHQQTPNQIKSGTPYRTPKSVRR) is disordered. Polar residues predominate over residues 706–716 (PHQQTPNQIKS). Residue threonine 722 is modified to Phosphothreonine. The residue at position 725 (serine 725) is a Phosphoserine. A Phosphothreonine modification is found at threonine 741. In terms of domain architecture, AGC-kinase C-terminal spans 836–879 (SDVDWENLQHQTMPFIPQPDDETDTSYFEARNTAQHLTVSGFSL). Serine 875 and serine 878 each carry phosphoserine.

It belongs to the protein kinase superfamily. AGC Ser/Thr protein kinase family. In terms of processing, phosphorylation at Thr-741 by CDK1 during M phase activates its kinase activity. Maximum phosphorylation occurs in prometaphase.

It is found in the cytoplasm. The protein resides in the cytoskeleton. It localises to the microtubule organizing center. The protein localises to the centrosome. Its subcellular location is the nucleus. It is found in the cleavage furrow. The enzyme catalyses L-seryl-[protein] + ATP = O-phospho-L-seryl-[protein] + ADP + H(+). It carries out the reaction L-threonyl-[protein] + ATP = O-phospho-L-threonyl-[protein] + ADP + H(+). In terms of biological role, serine/threonine kinase that plays a key role in M phase by acting as a regulator of mitosis entry and maintenance. Acts by promoting the inactivation of protein phosphatase 2A (PP2A) during M phase: does not directly inhibit PP2A but acts by mediating phosphorylation and subsequent activation of ARPP19 and ENSA at 'Ser-62' and 'Ser-67', respectively. ARPP19 and ENSA are phosphatase inhibitors that specifically inhibit the PPP2R2D (PR55-delta) subunit of PP2A. Inactivation of PP2A during M phase is essential to keep cyclin-B1-CDK1 activity high. Following DNA damage, it is also involved in checkpoint recovery by being inhibited. Phosphorylates histone protein in vitro; however such activity is unsure in vivo. May be involved in megakaryocyte differentiation. The chain is Serine/threonine-protein kinase greatwall (MASTL) from Homo sapiens (Human).